Here is a 404-residue protein sequence, read N- to C-terminus: Succinyl-diaminopimelate desuccinylase (404 aa).

Residue H80 participates in Zn(2+) binding. Residue D82 is part of the active site. D113 is a Zn(2+) binding site. E147 (proton acceptor) is an active-site residue. E148, E176, and H373 together coordinate Zn(2+).

Belongs to the peptidase M20A family. DapE subfamily. Homodimer. Requires Zn(2+) as cofactor. It depends on Co(2+) as a cofactor.

The enzyme catalyses N-succinyl-(2S,6S)-2,6-diaminopimelate + H2O = (2S,6S)-2,6-diaminopimelate + succinate. It functions in the pathway amino-acid biosynthesis; L-lysine biosynthesis via DAP pathway; LL-2,6-diaminopimelate from (S)-tetrahydrodipicolinate (succinylase route): step 3/3. In terms of biological role, catalyzes the hydrolysis of N-succinyl-L,L-diaminopimelic acid (SDAP), forming succinate and LL-2,6-diaminopimelate (DAP), an intermediate involved in the bacterial biosynthesis of lysine and meso-diaminopimelic acid, an essential component of bacterial cell walls. In Allorhizobium ampelinum (strain ATCC BAA-846 / DSM 112012 / S4) (Agrobacterium vitis (strain S4)), this protein is Succinyl-diaminopimelate desuccinylase.